Consider the following 246-residue polypeptide: Phosphatidylserine decarboxylase proenzyme (246 aa).

S204 acts as the Schiff-base intermediate with substrate; via pyruvic acid in catalysis. At S204 the chain carries Pyruvic acid (Ser); by autocatalysis.

Belongs to the phosphatidylserine decarboxylase family. PSD-A subfamily. As to quaternary structure, heterodimer of a large membrane-associated beta subunit and a small pyruvoyl-containing alpha subunit. Requires pyruvate as cofactor. In terms of processing, is synthesized initially as an inactive proenzyme. Formation of the active enzyme involves a self-maturation process in which the active site pyruvoyl group is generated from an internal serine residue via an autocatalytic post-translational modification. Two non-identical subunits are generated from the proenzyme in this reaction, and the pyruvate is formed at the N-terminus of the alpha chain, which is derived from the carboxyl end of the proenzyme. The post-translation cleavage follows an unusual pathway, termed non-hydrolytic serinolysis, in which the side chain hydroxyl group of the serine supplies its oxygen atom to form the C-terminus of the beta chain, while the remainder of the serine residue undergoes an oxidative deamination to produce ammonia and the pyruvoyl prosthetic group on the alpha chain.

The protein localises to the cell membrane. The catalysed reaction is a 1,2-diacyl-sn-glycero-3-phospho-L-serine + H(+) = a 1,2-diacyl-sn-glycero-3-phosphoethanolamine + CO2. Its pathway is phospholipid metabolism; phosphatidylethanolamine biosynthesis; phosphatidylethanolamine from CDP-diacylglycerol: step 2/2. Functionally, catalyzes the formation of phosphatidylethanolamine (PtdEtn) from phosphatidylserine (PtdSer). The chain is Phosphatidylserine decarboxylase proenzyme from Zymomonas mobilis subsp. mobilis (strain ATCC 31821 / ZM4 / CP4).